The following is a 251-amino-acid chain: Hydroxyacylglutathione hydrolase (251 aa).

7 residues coordinate Zn(2+): His-53, His-55, Asp-57, His-58, His-110, Asp-127, and His-165.

This sequence belongs to the metallo-beta-lactamase superfamily. Glyoxalase II family. In terms of assembly, monomer. It depends on Zn(2+) as a cofactor.

It carries out the reaction an S-(2-hydroxyacyl)glutathione + H2O = a 2-hydroxy carboxylate + glutathione + H(+). The protein operates within secondary metabolite metabolism; methylglyoxal degradation; (R)-lactate from methylglyoxal: step 2/2. Functionally, thiolesterase that catalyzes the hydrolysis of S-D-lactoyl-glutathione to form glutathione and D-lactic acid. The sequence is that of Hydroxyacylglutathione hydrolase from Escherichia fergusonii (strain ATCC 35469 / DSM 13698 / CCUG 18766 / IAM 14443 / JCM 21226 / LMG 7866 / NBRC 102419 / NCTC 12128 / CDC 0568-73).